A 216-amino-acid polypeptide reads, in one-letter code: Regulatory protein RecX (216 aa).

Belongs to the RecX family.

It localises to the cytoplasm. Its function is as follows. Modulates RecA activity. This chain is Regulatory protein RecX, found in Clostridium tetani (strain Massachusetts / E88).